The primary structure comprises 150 residues: Transcriptional repressor NrdR (150 aa).

The segment at 3–34 (CPFCNFSDSKVVDSRPDKGGAAIRRRRECESC) is a zinc-finger region. In terms of domain architecture, ATP-cone spans 49–139 (PLVTKRDGRR…VYRSFKDINE (91 aa)).

This sequence belongs to the NrdR family. Zn(2+) is required as a cofactor.

Negatively regulates transcription of bacterial ribonucleotide reductase nrd genes and operons by binding to NrdR-boxes. The chain is Transcriptional repressor NrdR from Citrifermentans bemidjiense (strain ATCC BAA-1014 / DSM 16622 / JCM 12645 / Bem) (Geobacter bemidjiensis).